We begin with the raw amino-acid sequence, 326 residues long: Homoserine kinase (326 aa).

It belongs to the pseudomonas-type ThrB family.

It carries out the reaction L-homoserine + ATP = O-phospho-L-homoserine + ADP + H(+). It functions in the pathway amino-acid biosynthesis; L-threonine biosynthesis; L-threonine from L-aspartate: step 4/5. In Brucella melitensis biotype 1 (strain ATCC 23456 / CCUG 17765 / NCTC 10094 / 16M), this protein is Homoserine kinase.